The sequence spans 404 residues: MELFRNTNIDFLGKKWYFLAFSLVFSVAGLISMGARYAKTGTAVPLGVDFKGGTLVYVKFAQTPNLGDIRAAMDRSGLKDPKIQTYGGPANNEVLIALEQKETSEQALDAGKNTIIKALETNPASGKNDLNNVGSTTIRDYLMSKDPLHEVVDPGAKYQQIASQIVDYRDKERGGVLSSVDELQGHVPADVVNALKTDYFTSGFGVRNVEIVGPQVGKQLSNQALLATLYSLGGMLVYLWFRFELIYGIGAVVACFHDTIITVGAFSLLNRDISLTVVAAILTLIGYSMNDTIVVYDRIRENIKLLRRESLADIVNKSINQTLSRTILTSGLTFLTVLSLYVFGGEVLRGFSLALVIGILIGTYSSIAVAAPMLVAYQEWRGHRGTAALPGPAPRKNDRVKVKA.

6 helical membrane-spanning segments follow: residues 15-35 (KWYF…SMGA), 225-245 (LLAT…RFEL), 246-266 (IYGI…VGAF), 275-295 (LTVV…TIVV), 327-347 (ILTS…GGEV), and 355-375 (LVIG…PMLV).

This sequence belongs to the SecD/SecF family. SecF subfamily. Forms a complex with SecD. Part of the essential Sec protein translocation apparatus which comprises SecA, SecYEG and auxiliary proteins SecDF. Other proteins may also be involved.

The protein localises to the cell inner membrane. Functionally, part of the Sec protein translocase complex. Interacts with the SecYEG preprotein conducting channel. SecDF uses the proton motive force (PMF) to complete protein translocation after the ATP-dependent function of SecA. The chain is Protein translocase subunit SecF from Koribacter versatilis (strain Ellin345).